Reading from the N-terminus, the 563-residue chain is Inositol-3-phosphate synthase 1-B (563 aa).

This sequence belongs to the myo-inositol 1-phosphate synthase family. NAD(+) serves as cofactor.

It localises to the cytoplasm. The catalysed reaction is D-glucose 6-phosphate = 1D-myo-inositol 3-phosphate. It functions in the pathway polyol metabolism; myo-inositol biosynthesis; myo-inositol from D-glucose 6-phosphate: step 1/2. In terms of biological role, key enzyme in myo-inositol biosynthesis pathway that catalyzes the conversion of glucose 6-phosphate to 1-myo-inositol 1-phosphate in a NAD-dependent manner. Rate-limiting enzyme in the synthesis of all inositol-containing compounds. This chain is Inositol-3-phosphate synthase 1-B (isyna1-b), found in Xenopus laevis (African clawed frog).